A 423-amino-acid polypeptide reads, in one-letter code: uncharacterized protein (423 aa).

It belongs to the IIV-6 198R family.

This is an uncharacterized protein from Aedes vexans (Inland floodwater mosquito).